Reading from the N-terminus, the 264-residue chain is Astacin-like metalloprotease toxin 1 (264 aa).

The signal sequence occupies residues 1–16 (MIKYIGVFAFLVGGFC). Positions 17-51 (HDFETVISNQDPIVDGMRLVEGDMLFDDGPLFTER) are excised as a propeptide. Residues 52–249 (NAVKYDQQLW…VKVNKLYKCP (198 aa)) enclose the Peptidase M12A domain. Cystine bridges form between Cys-93-Cys-248 and Cys-114-Cys-135. His-143 contributes to the Zn(2+) binding site. Glu-144 is an active-site residue. 2 residues coordinate Zn(2+): His-147 and His-153. 2 N-linked (GlcNAc...) asparagine glycosylation sites follow: Asn-173 and Asn-185.

As to quaternary structure, monomer. Zn(2+) is required as a cofactor. Expressed by the venom gland.

It localises to the secreted. Its activity is regulated as follows. Inhibited by 1,10-phenanthroline. In terms of biological role, zinc metalloprotease. Provoques deadhesion of endothelial cells from cell cultures, and also degradation of fibronectin, fibrinogen and gelatin in vitro. Its role in the venom is not fully understood but it might act as a spreading factor that facilitates diffusion of other venom toxins. Alternatively, it might be involved in the proteolytic processing of other venom toxins or it might play a role in extra-oral digestion of prey. In Loxosceles intermedia (Brown spider), this protein is Astacin-like metalloprotease toxin 1.